The following is a 205-amino-acid chain: N-(5'-phosphoribosyl)anthranilate isomerase (205 aa).

Belongs to the TrpF family.

The catalysed reaction is N-(5-phospho-beta-D-ribosyl)anthranilate = 1-(2-carboxyphenylamino)-1-deoxy-D-ribulose 5-phosphate. The protein operates within amino-acid biosynthesis; L-tryptophan biosynthesis; L-tryptophan from chorismate: step 3/5. The polypeptide is N-(5'-phosphoribosyl)anthranilate isomerase (Maridesulfovibrio salexigens (strain ATCC 14822 / DSM 2638 / NCIMB 8403 / VKM B-1763) (Desulfovibrio salexigens)).